The primary structure comprises 118 residues: Large ribosomal subunit protein uL18 (118 aa).

The disordered stretch occupies residues 1–24 (MISKPDKNKTRQRRHARVRGKISG). Residues 10-20 (TRQRRHARVRG) show a composition bias toward basic residues.

This sequence belongs to the universal ribosomal protein uL18 family. In terms of assembly, part of the 50S ribosomal subunit; part of the 5S rRNA/L5/L18/L25 subcomplex. Contacts the 5S and 23S rRNAs.

Its function is as follows. This is one of the proteins that bind and probably mediate the attachment of the 5S RNA into the large ribosomal subunit, where it forms part of the central protuberance. The chain is Large ribosomal subunit protein uL18 from Lactiplantibacillus plantarum (strain ATCC BAA-793 / NCIMB 8826 / WCFS1) (Lactobacillus plantarum).